Reading from the N-terminus, the 479-residue chain is Ribosomal protein uS12 methylthiotransferase RimO (479 aa).

The tract at residues 1–34 is disordered; it reads MTVNTFDPSKASPVTHASDSASKTPEPNAVAAPS. Over residues 15–25 the composition is skewed to polar residues; it reads THASDSASKTP. The MTTase N-terminal domain occupies 39 to 151; it reads NRVGFVSLGC…VMGAVHGYIP (113 aa). [4Fe-4S] cluster is bound by residues cysteine 48, cysteine 84, cysteine 113, cysteine 184, cysteine 188, and cysteine 191. The Radical SAM core domain maps to 170–407; that stretch reads LTPRHYAYLK…METQQAISAA (238 aa). In terms of domain architecture, TRAM spans 410-476; that stretch reads KQKVGYEMDV…DYDLTGIAVE (67 aa).

Belongs to the methylthiotransferase family. RimO subfamily. [4Fe-4S] cluster serves as cofactor.

The protein resides in the cytoplasm. It carries out the reaction L-aspartate(89)-[ribosomal protein uS12]-hydrogen + (sulfur carrier)-SH + AH2 + 2 S-adenosyl-L-methionine = 3-methylsulfanyl-L-aspartate(89)-[ribosomal protein uS12]-hydrogen + (sulfur carrier)-H + 5'-deoxyadenosine + L-methionine + A + S-adenosyl-L-homocysteine + 2 H(+). Its function is as follows. Catalyzes the methylthiolation of an aspartic acid residue of ribosomal protein uS12. This is Ribosomal protein uS12 methylthiotransferase RimO from Saccharophagus degradans (strain 2-40 / ATCC 43961 / DSM 17024).